Here is a 91-residue protein sequence, read N- to C-terminus: Small ribosomal subunit protein uS19 (91 aa).

This sequence belongs to the universal ribosomal protein uS19 family.

In terms of biological role, protein S19 forms a complex with S13 that binds strongly to the 16S ribosomal RNA. The chain is Small ribosomal subunit protein uS19 from Shouchella clausii (strain KSM-K16) (Alkalihalobacillus clausii).